Here is a 220-residue protein sequence, read N- to C-terminus: Splicing factor U2AF 26 kDa subunit (220 aa).

Position 2 is an N-acetylalanine (alanine 2). The C3H1-type 1 zinc-finger motif lies at 12 to 40; that stretch reads EKDKVNCSFYFKIGACRHGDRCSRLHNKP. The RRM domain maps to 65 to 147; that stretch reads SHCHVSDVEV…QAVHAELSPV (83 aa). The C3H1-type 2 zinc-finger motif lies at 149–176; sequence DFRESCCRQYEMGECTRGGFCNFMHLRP. Residues 186–220 form a disordered region; the sequence is YGRGPRHRSPPRSHTGHRPRERNRRRSPDHRHGRF. A compositionally biased stretch (basic residues) spans 189–220; that stretch reads GPRHRSPPRSHTGHRPRERNRRRSPDHRHGRF.

It belongs to the splicing factor SR family. As to quaternary structure, interacts with GFI1, U2AF2 and C1QBP. Isoform 3 interacts with PER1. In terms of processing, isoform 3 is rapidly degraded by a proteasome-mediated degradation pathway. Ubiquitous. Highly expressed in the brain.

Its subcellular location is the nucleus. It is found in the nucleus speckle. The protein localises to the cytoplasm. Its function is as follows. RNA-binding protein that function as a pre-mRNA splicing factor. Plays a critical role in both constitutive and enhancer-dependent splicing by mediating protein-protein interactions and protein-RNA interactions required for accurate 3'-splice site selection. It can functionally substitute for U2AF1 in constitutive splicing and enhancer-dependent splicing. Acts by enhancing the binding of U2AF2 to weak pyrimidine tracts. Also participates in the regulation of alternative pre-mRNA splicing. Activates exon 5 skipping of PTPRC during T-cell activation; an event reversed by GFI1. Binds to RNA at the AG dinucleotide at the 3'-splice site. Shows a preference for AGC or AGA. Alternative splicing of U2AF1L4 may play a role in connecting the circadian rhythm to changing external cues: may provide a circadian buffering system in central and periphery clocks that allows synchronized adaption to clock-resetting stimuli in order to prevent potentially pathogenic desynchronization. This Mus musculus (Mouse) protein is Splicing factor U2AF 26 kDa subunit (U2af1l4).